Consider the following 389-residue polypeptide: Succinate--CoA ligase [ADP-forming] subunit beta (389 aa).

The region spanning 9-244 (KQLLAEYGIP…KTQEDETEVT (236 aa)) is the ATP-grasp domain. ATP is bound by residues lysine 46, 53–55 (GRG), glycine 102, and glutamate 107. Asparagine 199 and aspartate 213 together coordinate Mg(2+). Substrate is bound by residues asparagine 264 and 321-323 (GIV).

This sequence belongs to the succinate/malate CoA ligase beta subunit family. As to quaternary structure, heterotetramer of two alpha and two beta subunits. Mg(2+) serves as cofactor.

The catalysed reaction is succinate + ATP + CoA = succinyl-CoA + ADP + phosphate. It catalyses the reaction GTP + succinate + CoA = succinyl-CoA + GDP + phosphate. The protein operates within carbohydrate metabolism; tricarboxylic acid cycle; succinate from succinyl-CoA (ligase route): step 1/1. Succinyl-CoA synthetase functions in the citric acid cycle (TCA), coupling the hydrolysis of succinyl-CoA to the synthesis of either ATP or GTP and thus represents the only step of substrate-level phosphorylation in the TCA. The beta subunit provides nucleotide specificity of the enzyme and binds the substrate succinate, while the binding sites for coenzyme A and phosphate are found in the alpha subunit. The protein is Succinate--CoA ligase [ADP-forming] subunit beta of Xanthomonas oryzae pv. oryzae (strain MAFF 311018).